The following is a 925-amino-acid chain: Ectonucleotide pyrophosphatase/phosphodiesterase family member 1 (925 aa).

The span at 1 to 17 (MERDGCAGGGSRGGEGG) shows a compositional bias: gly residues. The tract at residues 1–43 (MERDGCAGGGSRGGEGGRAPREGPAGNGRDRGRSHAAEAPGDP) is disordered. The Cytoplasmic segment spans residues 1–76 (MERDGCAGGG…RTAKDPNTYK (76 aa)). Positions 45–52 (AAASLLAP) match the Di-leucine motif motif. A helical; Signal-anchor for type II membrane protein membrane pass occupies residues 77-97 (VLSLVLSVCVLTTILGCIFGL). Topologically, residues 98–925 (KPSCAKEVKS…THLPTFSQED (828 aa)) are extracellular. SMB domains follow at residues 104–144 (EVKS…IEPE) and 145–189 (HIWT…GEKS). 10 cysteine pairs are disulfide-bonded: Cys108-Cys122, Cys112-Cys140, Cys120-Cys133, Cys126-Cys132, Cys149-Cys166, Cys154-Cys184, Cys164-Cys177, Cys170-Cys176, Cys195-Cys241, and Cys203-Cys415. An N-linked (GlcNAc...) asparagine glycan is attached at Asn179. The phosphodiesterase stretch occupies residues 191-591 (VEEPCESINE…APNNGTHGSL (401 aa)). AMP contacts are provided by Asp218, Thr256, and Asn277. Positions 218 and 256 each coordinate Zn(2+). Thr256 (AMP-threonine intermediate) is an active-site residue. 2 residues coordinate CMP: Thr256 and Asn277. DTMP is bound by residues Thr256 and Asn277. The GMP site is built by Thr256 and Asn277. Thr256 is subject to Phosphothreonine. Residue Asn285 is glycosylated (N-linked (GlcNAc...) asparagine). GMP-binding residues include Leu290, Lys295, and Tyr340. Positions 295 and 340 each coordinate AMP. Lys295 and Tyr340 together coordinate CMP. Tyr340 contacts dTMP. Asn341 carries N-linked (GlcNAc...) asparagine glycosylation. AMP is bound at residue Asp376. 4 residues coordinate Zn(2+): Asp376, His380, Asp423, and His424. Position 376 (Asp376) interacts with CMP. Asp376 contacts dTMP. Position 376 (Asp376) interacts with GMP. Residue His380 participates in 2',3'-cGAMP binding. His424 lines the AMP pocket. Position 424 (His424) interacts with CMP. His424 lines the dTMP pocket. His424 lines the GMP pocket. Intrachain disulfides connect Cys431–Cys530, Cys480–Cys868, Cys614–Cys672, Cys626–Cys726, Cys628–Cys711, and Cys838–Cys848. Residue Asn477 is glycosylated (N-linked (GlcNAc...) asparagine). Ser532 serves as a coordination point for 2',3'-cGAMP. His535 provides a ligand contact to AMP. His535 contributes to the Zn(2+) binding site. A CMP-binding site is contributed by His535. His535 contacts dTMP. His535 contacts GMP. N-linked (GlcNAc...) asparagine glycans are attached at residues Asn585, Asn643, Asn700, Asn731, and Asn748. Residues 597–647 (NPVYTPKHPKEVHPLVQCPFTRNPRDNLGCSCNPSILPIEDFQTQFNLTVA) are linker. The nuclease-like domain stretch occupies residues 654 to 925 (HETLPYGRPR…THLPTFSQED (272 aa)). Ca(2+)-binding residues include Asp800, Asp802, Asp804, Arg806, and Asp808.

It belongs to the nucleotide pyrophosphatase/phosphodiesterase family. In terms of assembly, homodimer. Interacts with INSR; leading to inhibit INSR autophosphorylation and subsequent activation of INSR kinase activity. As to quaternary structure, monomeric. Zn(2+) is required as a cofactor. In terms of processing, autophosphorylated as part of the catalytic cycle of phosphodiesterase/pyrophosphatase activity. N-glycosylated. Post-translationally, the secreted form is produced through cleavage at Lys-103 by intracellular processing. In terms of tissue distribution, expressed in plasma cells and also in a number of non-lymphoid tissues, including the distal convoluted tubule of the kidney, chondrocytes and epididymis. Expressed in melanocytes but not in keratinocytes.

The protein localises to the cell membrane. It localises to the basolateral cell membrane. It is found in the secreted. It carries out the reaction Hydrolytically removes 5'-nucleotides successively from the 3'-hydroxy termini of 3'-hydroxy-terminated oligonucleotides.. The catalysed reaction is a ribonucleoside 5'-triphosphate + H2O = a ribonucleoside 5'-phosphate + diphosphate + H(+). The enzyme catalyses ATP + H2O = AMP + diphosphate + H(+). It catalyses the reaction UTP + H2O = UMP + diphosphate + H(+). It carries out the reaction GTP + H2O = GMP + diphosphate + H(+). The catalysed reaction is CTP + H2O = CMP + diphosphate + H(+). The enzyme catalyses 2',3'-cGAMP + 2 H2O = GMP + AMP + 2 H(+). It catalyses the reaction P(1),P(4)-bis(5'-adenosyl) tetraphosphate + H2O = AMP + ATP + 2 H(+). It carries out the reaction 3',5'-cyclic AMP + H2O = AMP + H(+). At low concentrations of ATP, a phosphorylated intermediate is formed which inhibits further hydrolysis. Functionally, nucleotide pyrophosphatase that generates diphosphate (PPi) and functions in bone mineralization and soft tissue calcification by regulating pyrophosphate levels. PPi inhibits bone mineralization and soft tissue calcification by binding to nascent hydroxyapatite crystals, thereby preventing further growth of these crystals. Preferentially hydrolyzes ATP, but can also hydrolyze other nucleoside 5' triphosphates such as GTP, CTP and UTP to their corresponding monophosphates with release of pyrophosphate, as well as diadenosine polyphosphates, and also 3',5'-cAMP to AMP. May also be involved in the regulation of the availability of nucleotide sugars in the endoplasmic reticulum and Golgi, and the regulation of purinergic signaling. Inhibits ectopic joint calcification and maintains articular chondrocytes by repressing hedgehog signaling; it is however unclear whether hedgehog inhibition is direct or indirect. Appears to modulate insulin sensitivity and function. Also involved in melanogenesis. Also able to hydrolyze 2',3'-cGAMP (cyclic GMP-AMP), a second messenger that activates TMEM173/STING and triggers type-I interferon production. 2',3'-cGAMP degradation takes place in the lumen or extracellular space, and not in the cytosol where it is produced; the role of 2',3'-cGAMP hydrolysis is therefore unclear. Not able to hydrolyze the 2',3'-cGAMP linkage isomer 3'-3'-cGAMP. The protein is Ectonucleotide pyrophosphatase/phosphodiesterase family member 1 of Homo sapiens (Human).